A 421-amino-acid chain; its full sequence is Gamma-glutamyl phosphate reductase (421 aa).

This sequence belongs to the gamma-glutamyl phosphate reductase family.

Its subcellular location is the cytoplasm. It catalyses the reaction L-glutamate 5-semialdehyde + phosphate + NADP(+) = L-glutamyl 5-phosphate + NADPH + H(+). It participates in amino-acid biosynthesis; L-proline biosynthesis; L-glutamate 5-semialdehyde from L-glutamate: step 2/2. Its function is as follows. Catalyzes the NADPH-dependent reduction of L-glutamate 5-phosphate into L-glutamate 5-semialdehyde and phosphate. The product spontaneously undergoes cyclization to form 1-pyrroline-5-carboxylate. The chain is Gamma-glutamyl phosphate reductase from Nocardia farcinica (strain IFM 10152).